The primary structure comprises 448 residues: Chromosomal replication initiator protein DnaA (448 aa).

The segment at methionine 1–serine 93 is domain I, interacts with DnaA modulators. The domain II stretch occupies residues serine 94–threonine 110. Residues glycine 111–cysteine 328 are domain III, AAA+ region. ATP-binding residues include glycine 156, glycine 158, lysine 159, and threonine 160. The domain IV, binds dsDNA stretch occupies residues asparagine 329–serine 448.

This sequence belongs to the DnaA family. As to quaternary structure, oligomerizes as a right-handed, spiral filament on DNA at oriC.

Its subcellular location is the cytoplasm. Functionally, plays an essential role in the initiation and regulation of chromosomal replication. ATP-DnaA binds to the origin of replication (oriC) to initiate formation of the DNA replication initiation complex once per cell cycle. Binds the DnaA box (a 9 base pair repeat at the origin) and separates the double-stranded (ds)DNA. Forms a right-handed helical filament on oriC DNA; dsDNA binds to the exterior of the filament while single-stranded (ss)DNA is stabiized in the filament's interior. The ATP-DnaA-oriC complex binds and stabilizes one strand of the AT-rich DNA unwinding element (DUE), permitting loading of DNA polymerase. After initiation quickly degrades to an ADP-DnaA complex that is not apt for DNA replication. Binds acidic phospholipids. The chain is Chromosomal replication initiator protein DnaA from Haemophilus ducreyi (strain 35000HP / ATCC 700724).